We begin with the raw amino-acid sequence, 445 residues long: Trimethylamine monooxygenase (445 aa).

Positions 14, 39, 41, 47, 48, and 64 each coordinate FAD. NADP(+) contacts are provided by tryptophan 72 and asparagine 74. Positions 74 and 127 each coordinate FAD. Threonine 204, serine 205, serine 207, and arginine 228 together coordinate NADP(+). Residues glutamine 317 and threonine 320 each contribute to the FAD site. Arginine 411 serves as a coordination point for NADP(+).

The protein belongs to the FMO family. The cofactor is FAD.

The catalysed reaction is trimethylamine + NADPH + O2 = trimethylamine N-oxide + NADP(+) + H2O. Its function is as follows. Catalyzes the oxidation of trimethylamine (TMA) to produce trimethylamine N-oxide (TMAO). In vitro, has a broad substrate specificity, oxidizing many nitrogen- and sulfur-containing compounds, including dimethylamine (DMA), dimethylsulfide (DMS) and dimethylsulfoxide (DMSO). This chain is Trimethylamine monooxygenase, found in Roseovarius sp. (strain 217).